The following is a 623-amino-acid chain: Kelch-like protein diablo (623 aa).

A disordered region spans residues 1–54 (MGDLPGSGSTAQPRDAAVTGTGGNSTAGGGSSVGSTAVDRPPSPARLSHTSEKH). Residue T19 is modified to Phosphothreonine. The span at 20-32 (GTGGNSTAGGGSS) shows a compositional bias: gly residues. A BTB domain is found at 72–139 (CDVVLNVGGR…CYTAHIMVEE (68 aa)). The BACK domain maps to 174-276 (CLGIRAFADT…SPKFLVGTVG (103 aa)). 6 Kelch repeats span residues 323–369 (VLFA…VLND), 371–417 (LYAV…VLDG), 418–464 (FLYA…VLGG), 466–511 (LYAI…VFNN), 513–558 (IYAV…VVNG), and 559–605 (QLYA…VMRA).

The protein operates within protein modification; protein ubiquitination. In terms of biological role, probable substrate-specific adapter of an E3 ubiquitin-protein ligase complex which mediates the ubiquitination and subsequent proteasomal degradation of target proteins. May have a role in synapse differentiation and growth. In Drosophila erecta (Fruit fly), this protein is Kelch-like protein diablo.